A 432-amino-acid chain; its full sequence is Glutamate-1-semialdehyde 2,1-aminomutase (432 aa).

Lys-271 is modified (N6-(pyridoxal phosphate)lysine).

It belongs to the class-III pyridoxal-phosphate-dependent aminotransferase family. HemL subfamily. As to quaternary structure, homodimer. Requires pyridoxal 5'-phosphate as cofactor.

Its subcellular location is the cytoplasm. The catalysed reaction is (S)-4-amino-5-oxopentanoate = 5-aminolevulinate. The protein operates within porphyrin-containing compound metabolism; protoporphyrin-IX biosynthesis; 5-aminolevulinate from L-glutamyl-tRNA(Glu): step 2/2. The chain is Glutamate-1-semialdehyde 2,1-aminomutase from Protochlamydia amoebophila (strain UWE25).